A 462-amino-acid polypeptide reads, in one-letter code: TNF receptor-associated factor family protein DDB_G0267754 (462 aa).

An RING-type; degenerate zinc finger spans residues 24–62 (CCVCECLLIEALQCRNGHVACKNCFIKIVKSKKECMTCR). The tract at residues 104 to 127 (KNGNGNEGSSANEIEQPQQPQQQQ) is disordered. 2 consecutive TRAF-type zinc fingers follow at residues 150–217 (SHLK…SHTE) and 214–273 (SHTE…NQLA). Residues 326–449 (MFRGKWVISN…NDTLTINFSI (124 aa)) enclose the MATH domain.

Belongs to the TNF receptor-associated factor family. A subfamily.

Its subcellular location is the cytoplasm. Its function is as follows. Probable adapter protein and signal transducer that links members of the tumor necrosis factor receptor family to different signaling pathways by association with the receptor cytoplasmic domain and kinases. This is TNF receptor-associated factor family protein DDB_G0267754 from Dictyostelium discoideum (Social amoeba).